The following is an 863-amino-acid chain: DNA mismatch repair protein MutS 2 (863 aa).

626 to 633 (GPNMSGKS) contacts ATP.

This sequence belongs to the DNA mismatch repair MutS family.

Its function is as follows. This protein is involved in the repair of mismatches in DNA. It is possible that it carries out the mismatch recognition step. This protein has a weak ATPase activity. This Halobacterium salinarum (strain ATCC 700922 / JCM 11081 / NRC-1) (Halobacterium halobium) protein is DNA mismatch repair protein MutS 2 (mutS2).